We begin with the raw amino-acid sequence, 332 residues long: MSGQHQITEQPSGNPLSRTSTLIQEKPLTPTSSHAETQKHLEAPRQSSFLIQLQDIRHAIRMPMAEFFGVALLIIFGAGSACQVVLSTNPNVASSDRGSFLSINLGWAIGIAMGAWVSGGISGGHINPAITIAMATYRGFPWRRVPSYIFAQVLGGVVGAALVYANYIHAIDIFEGGRHVRTQATASLFATYALPYMTQVSCFFSEFLATAVLSMMVLALTDNRNGAPTNGLLPFALFVLFIGLGASLGMETAYALNPARDFGPRLFLAMSGYGKALFNYRSQYWLWAPIIAPVLGAQAGGLLYDTFLYDGDNSPIKWRRASSQECQLAEVV.

Residues 1 to 66 are Cytoplasmic-facing; the sequence is MSGQHQITEQ…RHAIRMPMAE (66 aa). A helical transmembrane segment spans residues 67 to 87; that stretch reads FFGVALLIIFGAGSACQVVLS. The Extracellular portion of the chain corresponds to 88–100; that stretch reads TNPNVASSDRGSF. A helical transmembrane segment spans residues 101–121; that stretch reads LSINLGWAIGIAMGAWVSGGI. Residues 122–144 lie on the Cytoplasmic side of the membrane; sequence SGGHINPAITIAMATYRGFPWRR. Residues 127–129 carry the NPA 1 motif; sequence NPA. The chain crosses the membrane as a helical span at residues 145 to 165; the sequence is VPSYIFAQVLGGVVGAALVYA. The Extracellular portion of the chain corresponds to 166 to 199; the sequence is NYIHAIDIFEGGRHVRTQATASLFATYALPYMTQ. A helical membrane pass occupies residues 200–220; the sequence is VSCFFSEFLATAVLSMMVLAL. The Cytoplasmic segment spans residues 221 to 230; that stretch reads TDNRNGAPTN. Residues 231-251 traverse the membrane as a helical segment; that stretch reads GLLPFALFVLFIGLGASLGME. Over 252 to 283 the chain is Extracellular; sequence TAYALNPARDFGPRLFLAMSGYGKALFNYRSQ. Residues 257–259 carry the NPA 2 motif; the sequence is NPA. Residues 284–304 form a helical membrane-spanning segment; the sequence is YWLWAPIIAPVLGAQAGGLLY. Topologically, residues 305–332 are cytoplasmic; the sequence is DTFLYDGDNSPIKWRRASSQECQLAEVV.

This sequence belongs to the MIP/aquaporin (TC 1.A.8) family.

It is found in the membrane. The catalysed reaction is H2O(in) = H2O(out). Its function is as follows. Water channel required to facilitate the transport of water across membranes. Does not mediate the transport carbon dioxide across the membrane. This Laccaria bicolor (Bicoloured deceiver) protein is Aquaporin-7-1.